A 439-amino-acid chain; its full sequence is GTPase Der (439 aa).

EngA-type G domains follow at residues 4 to 169 (AMVS…PQEE) and 177 to 352 (IKIA…EEYN). GTP is bound by residues 10–17 (GRPNVGKS), 57–61 (DTGGL), 120–123 (NKVD), 183–190 (GKPNVGKS), 230–234 (DTAGI), and 295–298 (NKWD). The KH-like domain occupies 353 to 437 (KRITTGLLNN…PIVISTKKRG (85 aa)).

This sequence belongs to the TRAFAC class TrmE-Era-EngA-EngB-Septin-like GTPase superfamily. EngA (Der) GTPase family. In terms of assembly, associates with the 50S ribosomal subunit.

GTPase that plays an essential role in the late steps of ribosome biogenesis. The polypeptide is GTPase Der (Thermoanaerobacter sp. (strain X514)).